The sequence spans 379 residues: Eukaryotic translation initiation factor 3 subunit M (379 aa).

The PCI domain occupies 179 to 341 (RSEEASKVMI…RKVIISSVAQ (163 aa)).

Belongs to the eIF-3 subunit M family. As to quaternary structure, component of the eukaryotic translation initiation factor 3 (eIF-3) complex.

Its subcellular location is the cytoplasm. Functionally, component of the eukaryotic translation initiation factor 3 (eIF-3) complex, which is involved in protein synthesis of a specialized repertoire of mRNAs and, together with other initiation factors, stimulates binding of mRNA and methionyl-tRNAi to the 40S ribosome. The eIF-3 complex specifically targets and initiates translation of a subset of mRNAs involved in cell proliferation. This chain is Eukaryotic translation initiation factor 3 subunit M, found in Nematostella vectensis (Starlet sea anemone).